Here is a 191-residue protein sequence, read N- to C-terminus: Cathelicidin-related antimicrobial peptide Na_CRAMP (191 aa).

A signal peptide spans 1–22; that stretch reads MEGFFWKTLLVVGALTISGTSS. Residues 23–161 constitute a propeptide that is removed on maturation; it reads FPHKPLTYEE…DQPKRVKRFK (139 aa). Cystine bridges form between Cys-81–Cys-92 and Cys-103–Cys-120. The disordered stretch occupies residues 126–154; it reads EEEQKQEEGNEEEKEVEKEEKEEDQKDQP. Residues 140 to 154 show a composition bias toward basic and acidic residues; that stretch reads EVEKEEKEEDQKDQP.

Belongs to the cathelicidin family. As to expression, expressed by the venom gland.

The protein localises to the secreted. Its subcellular location is the target cell membrane. Potent antimicrobial peptide against most of Gram-negative bacteria, some Gram-positive bacteria (Bacillus) and some fungi. Adopts an amphipathic alpha helical conformation, that may allow to partition into the target membrane. No hemolytic and cytotoxic activities have been observed on mammalian cells. In Naja atra (Chinese cobra), this protein is Cathelicidin-related antimicrobial peptide Na_CRAMP.